A 1233-amino-acid polypeptide reads, in one-letter code: MGFLKLIEIENFKSYKGRQIIGPFQRFTAIIGPNGSGKSNLMDAISFVLGEKTSNLRVKTLRDLIHGAPVGKPAANRAFVSMVYSEEGAEDRTFARVIVGGSSEYKINNKVVQLHEYSEELEKLGILIKARNFLVFQGAVESIAMKNPKERTALFEEISRSGELAQEYDKRKKEMVKAEEDTQFNYHRKKNIAAERKEAKQEKEEADRYQALKDEVVRAQVQLQLFKLYHNEVEIEKLNKELASKNKEIEKDKKRMDKVEDELKEKKKELGKMMREQQQIEKEIKEKDSELNQKRPQYIKAKENTSHKIKKLEAAKKSLQNRQKHYKKRKGDMDELEKEMLSVEKARQEFEERMEEESQSQGRDLTLEENQVKKYHRLKEEASKRAATLAQELEKFNRDQKADQDRLDLEERKKVETEAKIKQKLREIEENQKRIEKLEEYITTSKQSLEEQKKLEGELTEEVEMAKRRIDEINKELNQVMEQLGDARIDRQESSRQQRKAEIMESIKRLYPGSVYGRLIDLCQPTQKKYQIAVTKVLGKNMDAIIVDSEKTGRDCIQYIKEQRGEPETFLPLDYLEVKPTDEKLRELKGAKLVIDVIRYEPPHIKKALQYACGNALVCDNVEDARRIAFGGHQRHKTVALDGTLFQKSGVISGGASDLKAKARRWDEKAVDKLKEKKERLTEELKEQMKAKRKEAELRQVQSQAHGLQMRLKYSQSDLEQTKTRHLALNLQEKSKLESELANFGPRINDIKRIIQSREREMKDLKEKMNQVEDEVFEEFCREIGVRNIREFEEEKVKRQNEIAKKRLEFENQKTRLGIQLDFEKNQLKEDQDKVHMWEQTVKKDENEIEKLKKEEQRHMKIIDETMAQLQDLKNQHLAKKSEVNDKNHEMEEIRKKLGGANKEMTHLQKEVTAIETKLEQKRSDRHNLLQACKMQDIKLPLSKGTMDDISQEEGGSQGEESVSGSQRTSSIYAREALIEIDYGDLCEDLKDAQAEEEIKQEMNTLQQKLNEQQSVLQRIAAPNMKAMEKLESVRDKFQETSDEFEAARKRAKKAKQAFEQIKKERFDRFNACFESVATNIDEIYKALSRNSSAQAFLGPENPEEPYLDGINYNCVAPGKRFRPMDNLSGGEKTVAALALLFAIHSYKPAPFFVLDEIDAALDNTNIGKVANYIKEQSTCNFQAIVISLKEEFYTKAESLIGVYPEQGDCVISKVLTFDLTKYPDANPNPNEQ.

An ATP-binding site is contributed by 32-39; the sequence is GPNGSGKS. Coiled coils occupy residues 104 to 124 and 163 to 503; these read EYKI…LEKL and ELAQ…KAEI. Positions 284-293 are enriched in basic and acidic residues; that stretch reads IKEKDSELNQ. Disordered regions lie at residues 284–307 and 350–369; these read IKEK…NTSH and FEER…TLEE. Phosphoserine is present on residues Ser358 and Ser360. The region spanning 515 to 629 is the SMC hinge domain; the sequence is VYGRLIDLCQ…DNVEDARRIA (115 aa). N6-acetyllysine occurs at positions 648 and 713. Residues 660 to 935 are a coiled coil; that stretch reads KAKARRWDEK…RHNLLQACKM (276 aa). Residues 946–969 are disordered; sequence TMDDISQEEGGSQGEESVSGSQRT. Low complexity predominate over residues 953–967; the sequence is EEGGSQGEESVSGSQ. 4 positions are modified to phosphoserine: Ser957, Ser962, Ser966, and Ser970. A coiled-coil region spans residues 991–1068; the sequence is KDAQAEEEIK…FEQIKKERFD (78 aa). Lys1037 is subject to N6-acetyllysine.

The protein belongs to the SMC family. SMC1 subfamily. Forms a heterodimer with SMC3 in cohesin complexes. Cohesin complexes are composed of the SMC1 (SMC1A or meiosis-specific SMC1B) and SMC3 heterodimer attached via their SMC hinge domain, RAD21 which link them, and one STAG protein (STAG1, STAG2 or meiosis-specific STAG3), which interacts with RAD21. In germ cell cohesin complexes, SMC1A is mutually exclusive with SMC1B. Found in a complex with CDCA5, SMC3 and RAD21, PDS5A/SCC-112 and PDS5B/APRIN. Interacts with STAG3, NDC80, BRAC1, BRAT1 and RPGR. Found in a complex containing POLE and SMC3. The cohesin complex interacts with the cohesin loading complex subunits NIPBL/Scc2 (via HEAT repeats) and MAU2/Scc4. NIPBL directly contacts all members of the complex, RAD21, SMC1A/B, SMC3 and STAG1. Interacts with SYCP2. Phosphorylated upon ionizing radiation or DNA methylation. Phosphorylation of Ser-957 and Ser-966 activates it and is required for S-phase checkpoint activation. In terms of processing, ubiquitinated by the DCX(DCAF15) complex, leading to its degradation.

Its subcellular location is the nucleus. The protein localises to the chromosome. Its function is as follows. Involved in chromosome cohesion during cell cycle and in DNA repair. Central component of cohesin complex. The cohesin complex is required for the cohesion of sister chromatids after DNA replication. The cohesin complex apparently forms a large proteinaceous ring within which sister chromatids can be trapped. At anaphase, the complex is cleaved and dissociates from chromatin, allowing sister chromatids to segregate. The cohesin complex may also play a role in spindle pole assembly during mitosis. Involved in DNA repair via its interaction with BRCA1 and its related phosphorylation by ATM, or via its phosphorylation by ATR. Works as a downstream effector both in the ATM/NBS1 branch and in the ATR/MSH2 branch of S-phase checkpoint. The polypeptide is Structural maintenance of chromosomes protein 1A (Smc1a) (Rattus norvegicus (Rat)).